Here is a 240-residue protein sequence, read N- to C-terminus: tRNA pseudouridine synthase B (240 aa).

The Nucleophile role is filled by Asp54.

The protein belongs to the pseudouridine synthase TruB family. Type 1 subfamily.

It catalyses the reaction uridine(55) in tRNA = pseudouridine(55) in tRNA. Functionally, responsible for synthesis of pseudouridine from uracil-55 in the psi GC loop of transfer RNAs. The chain is tRNA pseudouridine synthase B from Chlorobium phaeovibrioides (strain DSM 265 / 1930) (Prosthecochloris vibrioformis (strain DSM 265)).